A 77-amino-acid chain; its full sequence is Protein AC145 (77 aa).

It is found in the host nucleus. Its subcellular location is the virion. Its function is as follows. Plays a role in primary oral infection of the host. The polypeptide is Protein AC145 (Autographa californica nuclear polyhedrosis virus (AcMNPV)).